A 198-amino-acid polypeptide reads, in one-letter code: CASP-like protein 4B3 (198 aa).

A disordered region spans residues 1 to 27; the sequence is MSSSGPPAGDGRDDASGPGPAGAAAAA. Residues 1–51 lie on the Cytoplasmic side of the membrane; sequence MSSSGPPAGDGRDDASGPGPAGAAAAADGSVPVSRSIVERWKMEPAAARAR. Residues 16 to 27 are compositionally biased toward low complexity; it reads SGPGPAGAAAAA. The chain crosses the membrane as a helical span at residues 52–72; it reads LLLRAVAWLFSLLALVVMASN. At 73–85 the chain is on the extracellular side; it reads KHGHGGAQDFDNY. A helical membrane pass occupies residues 86-106; it reads PEYTYCLGISIIAVLYTTAQV. The Cytoplasmic segment spans residues 107–124; that stretch reads TRDVHRLSWGRDVIAGRK. The chain crosses the membrane as a helical span at residues 125–145; sequence AAAVVDFAGDQVVAYLLMSAL. The Extracellular portion of the chain corresponds to 146–166; the sequence is SAAAPVTDYMRQAADNLFTDS. A helical transmembrane segment spans residues 167–187; that stretch reads AAAAISMAFLAFLAAGLSALV. Over 188-198 the chain is Cytoplasmic; it reads SGYNLAMEVLV.

The protein belongs to the Casparian strip membrane proteins (CASP) family. Homodimer and heterodimers.

The protein resides in the cell membrane. In Oryza sativa subsp. japonica (Rice), this protein is CASP-like protein 4B3.